An 893-amino-acid chain; its full sequence is Major vault protein (893 aa).

An N-acetylalanine modification is found at Ala2. MVP repeat units lie at residues 2-56, 57-111, 112-164, 165-217, 218-272, 273-323, 324-379, 380-457, and 458-520; these read ATEE…VPPR, HYCT…DITP, LQVV…EIIQ, ATII…DLVD, AVIL…GVVP, ITTL…IQDV, YVLS…ERQA, IPLD…KTRV, and VSYR…LLGP. A Glycyl lysine isopeptide (Lys-Gly) (interchain with G-Cter in SUMO2) cross-link involves residue Lys444. Ser445 is modified (phosphoserine). Residue Lys704 forms a Glycyl lysine isopeptide (Lys-Gly) (interchain with G-Cter in SUMO2) linkage. The interval 856 to 893 is disordered; the sequence is QPLGRRVASGPSPGEGISPQSAQAPQAPGDNHVVPVLR.

The vault ribonucleoprotein particle is a huge (400 A x 670 A) cage structure of 12.9 MDa. It consists of a dimer of half-vaults, with each half-vault comprising 39 identical major vault protein (MVP) chains, PARP4 and one or more vault RNAs (vRNAs). Interacts with TEP1. Interacts with PTEN and activated MAPK1. The phosphorylated protein interacts with the SH2 domains of PTPN11 and SRC. Interacts with APEX1. May interact with ZNF540. In terms of processing, phosphorylated on Tyr residues after EGF stimulation. Post-translationally, dephosphorylated by PTPN11.

The protein localises to the cytoplasm. Its subcellular location is the nucleus. Functionally, required for normal vault structure. Vaults are multi-subunit structures that may act as scaffolds for proteins involved in signal transduction. Vaults may also play a role in nucleo-cytoplasmic transport. Down-regulates IFNG-mediated STAT1 signaling and subsequent activation of JAK. Down-regulates SRC activity and signaling through MAP kinases. This chain is Major vault protein (MVP), found in Pongo abelii (Sumatran orangutan).